The following is a 185-amino-acid chain: Casparian strip membrane protein 1 (185 aa).

Over 1–32 (MKAVSIEAGERSKAKRVHGVNRGISVFDLVLR) the chain is Cytoplasmic. The helical transmembrane segment at 33–53 (IVALVGTLASAVAMGTAGQAL) threads the bilayer. Residues 54-73 (SFSTQIVNFEAQYDDIDAFK) lie on the Extracellular side of the membrane. The chain crosses the membrane as a helical span at residues 74–94 (FFVVSNSITCVYLALSIPISI). Over 95 to 106 (FHIIRSRAGKSR) the chain is Cytoplasmic. Residues 107–127 (VLLIVLDAIMLVFLTSGASAA) traverse the membrane as a helical segment. The Extracellular portion of the chain corresponds to 128-160 (AAIVYLAHNGNTSTNWFSICQQYTDFCQRSAGS). The N-linked (GlcNAc...) asparagine glycan is linked to Asn138. The helical transmembrane segment at 161 to 181 (LIGSFGAMALMVLLIILSSIA) threads the bilayer. Over 182–185 (LSRR) the chain is Cytoplasmic.

The protein belongs to the Casparian strip membrane proteins (CASP) family. As to quaternary structure, homodimer and heterodimers.

It is found in the cell membrane. Regulates membrane-cell wall junctions and localized cell wall deposition. Required for establishment of the Casparian strip membrane domain (CSD) and the subsequent formation of Casparian strips, a cell wall modification of the root endodermis that determines an apoplastic barrier between the intraorganismal apoplasm and the extraorganismal apoplasm and prevents lateral diffusion. The polypeptide is Casparian strip membrane protein 1 (Solanum demissum (Wild potato)).